A 210-amino-acid polypeptide reads, in one-letter code: Proteasome subunit beta 2 (210 aa).

The propeptide at 1-12 is removed in mature form; by autocatalysis; sequence MSNNVEEKILHG. Residue Thr-13 is the Nucleophile of the active site.

This sequence belongs to the peptidase T1B family. As to quaternary structure, the 20S proteasome core is composed of 14 alpha and 14 beta subunits that assemble into four stacked heptameric rings, resulting in a barrel-shaped structure. The two inner rings, each composed of seven catalytic beta subunits, are sandwiched by two outer rings, each composed of seven alpha subunits. The catalytic chamber with the active sites is on the inside of the barrel. Has a gated structure, the ends of the cylinder being occluded by the N-termini of the alpha-subunits. Is capped at one or both ends by the proteasome regulatory ATPase, PAN.

The protein resides in the cytoplasm. It carries out the reaction Cleavage of peptide bonds with very broad specificity.. Its activity is regulated as follows. The formation of the proteasomal ATPase PAN-20S proteasome complex, via the docking of the C-termini of PAN into the intersubunit pockets in the alpha-rings, triggers opening of the gate for substrate entry. Interconversion between the open-gate and close-gate conformations leads to a dynamic regulation of the 20S proteasome proteolysis activity. Its function is as follows. Component of the proteasome core, a large protease complex with broad specificity involved in protein degradation. The chain is Proteasome subunit beta 2 from Cenarchaeum symbiosum (strain A).